Here is a 431-residue protein sequence, read N- to C-terminus: 3-phosphoshikimate 1-carboxyvinyltransferase (431 aa).

3 residues coordinate 3-phosphoshikimate: lysine 21, serine 22, and arginine 26. Lysine 21 serves as a coordination point for phosphoenolpyruvate. Phosphoenolpyruvate-binding residues include glycine 93 and arginine 121. Residues serine 166, glutamine 168, aspartate 318, and lysine 345 each coordinate 3-phosphoshikimate. Glutamine 168 is a binding site for phosphoenolpyruvate. Aspartate 318 serves as the catalytic Proton acceptor. Phosphoenolpyruvate contacts are provided by arginine 349 and arginine 391.

Belongs to the EPSP synthase family. In terms of assembly, monomer.

The protein resides in the cytoplasm. It catalyses the reaction 3-phosphoshikimate + phosphoenolpyruvate = 5-O-(1-carboxyvinyl)-3-phosphoshikimate + phosphate. The protein operates within metabolic intermediate biosynthesis; chorismate biosynthesis; chorismate from D-erythrose 4-phosphate and phosphoenolpyruvate: step 6/7. In terms of biological role, catalyzes the transfer of the enolpyruvyl moiety of phosphoenolpyruvate (PEP) to the 5-hydroxyl of shikimate-3-phosphate (S3P) to produce enolpyruvyl shikimate-3-phosphate and inorganic phosphate. In Sulfurihydrogenibium sp. (strain YO3AOP1), this protein is 3-phosphoshikimate 1-carboxyvinyltransferase.